Consider the following 322-residue polypeptide: 4-hydroxy-3-methylbut-2-enyl diphosphate reductase 1 (322 aa).

A [4Fe-4S] cluster-binding site is contributed by Cys-18. 2 residues coordinate (2E)-4-hydroxy-3-methylbut-2-enyl diphosphate: His-47 and His-82. The dimethylallyl diphosphate site is built by His-47 and His-82. The isopentenyl diphosphate site is built by His-47 and His-82. Cys-104 provides a ligand contact to [4Fe-4S] cluster. His-132 is a (2E)-4-hydroxy-3-methylbut-2-enyl diphosphate binding site. Residue His-132 participates in dimethylallyl diphosphate binding. Residue His-132 participates in isopentenyl diphosphate binding. Glu-134 serves as the catalytic Proton donor. A (2E)-4-hydroxy-3-methylbut-2-enyl diphosphate-binding site is contributed by Thr-173. Cys-203 is a binding site for [4Fe-4S] cluster. 4 residues coordinate (2E)-4-hydroxy-3-methylbut-2-enyl diphosphate: Ser-231, Ser-232, Asn-233, and Ser-276. Positions 231, 232, 233, and 276 each coordinate dimethylallyl diphosphate. Isopentenyl diphosphate-binding residues include Ser-231, Ser-232, Asn-233, and Ser-276.

The protein belongs to the IspH family. It depends on [4Fe-4S] cluster as a cofactor.

The enzyme catalyses isopentenyl diphosphate + 2 oxidized [2Fe-2S]-[ferredoxin] + H2O = (2E)-4-hydroxy-3-methylbut-2-enyl diphosphate + 2 reduced [2Fe-2S]-[ferredoxin] + 2 H(+). It carries out the reaction dimethylallyl diphosphate + 2 oxidized [2Fe-2S]-[ferredoxin] + H2O = (2E)-4-hydroxy-3-methylbut-2-enyl diphosphate + 2 reduced [2Fe-2S]-[ferredoxin] + 2 H(+). The protein operates within isoprenoid biosynthesis; dimethylallyl diphosphate biosynthesis; dimethylallyl diphosphate from (2E)-4-hydroxy-3-methylbutenyl diphosphate: step 1/1. It functions in the pathway isoprenoid biosynthesis; isopentenyl diphosphate biosynthesis via DXP pathway; isopentenyl diphosphate from 1-deoxy-D-xylulose 5-phosphate: step 6/6. Catalyzes the conversion of 1-hydroxy-2-methyl-2-(E)-butenyl 4-diphosphate (HMBPP) into a mixture of isopentenyl diphosphate (IPP) and dimethylallyl diphosphate (DMAPP). Acts in the terminal step of the DOXP/MEP pathway for isoprenoid precursor biosynthesis. In Bradyrhizobium diazoefficiens (strain JCM 10833 / BCRC 13528 / IAM 13628 / NBRC 14792 / USDA 110), this protein is 4-hydroxy-3-methylbut-2-enyl diphosphate reductase 1.